The sequence spans 366 residues: Galactoside alpha-(1,2)-fucosyltransferase 1 (366 aa).

Topologically, residues 1 to 8 (MWPPSHRQ) are cytoplasmic. A helical; Signal-anchor for type II membrane protein membrane pass occupies residues 9–25 (LCLAFLLVCVLSVISFF). Residues 26 to 366 (LHIHQDSFPH…LSSLWTLAKP (341 aa)) are Lumenal-facing. N-linked (GlcNAc...) asparagine glycans are attached at residues Asn66, Asn302, and Asn328.

This sequence belongs to the glycosyltransferase 11 family.

Its subcellular location is the golgi apparatus. It is found in the golgi stack membrane. The enzyme catalyses a beta-D-galactosyl-(1-&gt;4)-N-acetyl-beta-D-glucosaminyl derivative + GDP-beta-L-fucose = an alpha-L-Fuc-(1-&gt;2)-beta-D-Gal-(1-&gt;4)-beta-D-GlcNAc derivative + GDP + H(+). The catalysed reaction is a ganglioside GA1 + GDP-beta-L-fucose = a ganglioside Fuc-GA1 + GDP + H(+). It catalyses the reaction a beta-D-Gal-(1-&gt;3)-beta-D-GlcNAc-(1-&gt;3)-beta-D-Gal-(1-&gt;4)-beta-D-Glc-(1&lt;-&gt;1')-Cer(d18:1(4E)) + GDP-beta-L-fucose = alpha-L-fucosyl-(1-&gt;2)- beta-D-galactosyl-(1-&gt;3)-N-acetyl-beta-D-glucosaminyl-(1-&gt;3)-beta-D-galactosyl-(1-&gt;4)-beta-D-glucosyl-(1&lt;-&gt;1')-N-acylsphing-4-enine + GDP + H(+). It carries out the reaction a neolactoside nLc4Cer(d18:1(4E)) + GDP-beta-L-fucose = a neolactoside IV(2)-alpha-Fuc-nLc4Cer(d18:1(4E)) + GDP + H(+). The enzyme catalyses a ganglioside GM1 + GDP-beta-L-fucose = a ganglioside Fuc-GM1 + GDP + H(+). The catalysed reaction is beta-D-galactosyl-(1-&gt;3)-N-acetyl-D-galactosamine + GDP-beta-L-fucose = alpha-L-fucosyl-(1-&gt;2)-beta-D-galactosyl-(1-&gt;3)-N-acetyl-D-galactosamine + GDP + H(+). Its pathway is protein modification; protein glycosylation. Functionally, catalyzes the transfer of L-fucose, from a guanosine diphosphate-beta-L-fucose, to the terminal galactose residue of glycoconjugates through an alpha(1,2) linkage leading to H antigen synthesis that is an intermediate substrate in the synthesis of ABO blood group antigens. H antigen is essential for maturation of the glomerular layer of the main olfactory bulb, in cell migration and early cell-cell contacts during tumor associated angiogenesis. Preferentially fucosylates soluble lactose and to a lesser extent fucosylates glycolipids gangliosides GA1 and GM1a. In Pan troglodytes (Chimpanzee), this protein is Galactoside alpha-(1,2)-fucosyltransferase 1.